A 146-amino-acid chain; its full sequence is Large ribosomal subunit protein uL15 (146 aa).

A compositionally biased stretch (basic and acidic residues) spans 1–13 (MKLHELKPAEGSR). Residues 1–51 (MKLHELKPAEGSRKVRNRVGRGIGSGNGKTAGKGHKGQNARSGGGVRLGFE) form a disordered region. Composition is skewed to gly residues over residues 21–31 (RGIGSGNGKTA) and 42–51 (SGGGVRLGFE).

Belongs to the universal ribosomal protein uL15 family. Part of the 50S ribosomal subunit.

In terms of biological role, binds to the 23S rRNA. The protein is Large ribosomal subunit protein uL15 of Bacillus cereus (strain G9842).